The following is a 109-amino-acid chain: Iron-sulfur assembly protein IscA-like 3, mitochondrial (109 aa).

The transit peptide at 1–18 (MRKQVLALSDTAAARIRQ) directs the protein to the mitochondrion. Fe cation-binding residues include cysteine 37, cysteine 100, and cysteine 102.

It belongs to the HesB/IscA family. In terms of assembly, homodimer; may form tetramers and higher multimers. It depends on Fe cation as a cofactor.

The protein resides in the mitochondrion. In terms of biological role, involved in the assembly of mitochondrial iron-sulfur proteins. Probably involved in the binding of an intermediate of Fe/S cluster assembly. This Arabidopsis thaliana (Mouse-ear cress) protein is Iron-sulfur assembly protein IscA-like 3, mitochondrial.